We begin with the raw amino-acid sequence, 383 residues long: 8-amino-7-oxononanoate synthase (383 aa).

Positions 27 and 34 each coordinate substrate. 114–115 (GY) contacts pyridoxal 5'-phosphate. His-139 is a binding site for substrate. Residues Ser-187, 212 to 215 (DDAH), and 232 to 235 (TLSK) each bind pyridoxal 5'-phosphate. Lys-235 bears the N6-(pyridoxal phosphate)lysine mark. Thr-344 contacts substrate.

It belongs to the class-II pyridoxal-phosphate-dependent aminotransferase family. BioF subfamily. As to quaternary structure, homodimer. The cofactor is pyridoxal 5'-phosphate.

It catalyses the reaction 6-carboxyhexanoyl-[ACP] + L-alanine + H(+) = (8S)-8-amino-7-oxononanoate + holo-[ACP] + CO2. The protein operates within cofactor biosynthesis; biotin biosynthesis. In terms of biological role, catalyzes the decarboxylative condensation of pimeloyl-[acyl-carrier protein] and L-alanine to produce 8-amino-7-oxononanoate (AON), [acyl-carrier protein], and carbon dioxide. The polypeptide is 8-amino-7-oxononanoate synthase (Methylorubrum extorquens (strain CM4 / NCIMB 13688) (Methylobacterium extorquens)).